Consider the following 13477-residue polypeptide: Mucin-3B (13477 aa).

A signal peptide spans 1–21; sequence MQLLGLLSILWMLKSSPGATG. Positions 219-234 are enriched in low complexity; sequence TISSTTRTTERTPLPT. 106 disordered regions span residues 219–243, 327–347, 360–383, 513–559, 622–643, 815–839, 923–968, 1154–1179, 1480–1511, 1529–1601, 1619–1638, 1692–1714, 1944–1968, 2064–2123, 2170–2197, 2275–2308, 2442–2462, 2476–2497, 2509–2537, 2591–2610, 2672–2717, 2812–2832, 2845–2867, 2922–2947, 3074–3109, 3309–3395, 3420–3481, 3545–3565, 3654–3727, 3740–3812, 4014–4047, 4067–4106, 4182–4249, 4269–4313, 4510–4530, 4557–4617, 4630–4651, 4802–4830, 4953–4986, 5128–5203, 5455–5486, 5627–5680, 5834–5908, 5957–5977, 5990–6017, 6030–6080, 6120–6150, 6172–6197, 6456–6481, 6541–6598, 6846–6867, 6946–6971, 6999–7021, 7067–7093, 7170–7206, 7225–7244, 7299–7329, 7400–7433, 7476–7532, 7578–7600, 7731–7766, 7922–7996, 8036–8066, 8088–8113, 8372–8397, 8457–8514, 8762–8783, 8862–8887, 8915–8941, 8983–9009, 9052–9122, 9141–9160, 9215–9240, 9335–9366, 9409–9465, 9566–9589, 9612–9674, 9734–9760, 9828–9859, 9883–9908, 9921–9973, 10076–10099, 10120–10166, 10189–10285, 10389–10425, 10462–10481, 10501–10537, 10640–10660, 10750–10828, 10887–11032, 11044–11065, 11276–11317, 11446–11482, 11566–11697, 11754–11779, 11818–11949, 12067–12103, 12186–12220, 12280–12323, 12364–12452, 12468–12578, 12616–12639, 12681–12700, 12785–12805, 12985–13011, and 13052–13086; these read TISSTTRTTERTPLPTGSIHTTMSP, TRSTPTSETTYPASPTSTVTD, GTLSPTTTLPPTSSSQQTTETPMT, SMTT…PSTL, ATTPTTNLGNTTTETTSHSTPS, TTTNSFTTSANMEPPSTAVATTGTG, TSQT…STTE, PSMSASNDRTTHTESISSPPASTSTL, SPTVQNTETSSFVSMTSATTPSERPTFTSTEN, SISA…FPET, MTSTPPITSSVTPTNTVTSM, TTSTPTSETTYSTSPTSTVTDSM, TTSATMEPPSSSVAATDTGQTTFTS, TPNA…IAKS, STSMTPSTVSTSIPTSQPKTVNSSSGGI, SSSMSESSAGTTHTESISSPPATTSTLHTTAEST, RSTPTSETTYPTSPTSTVKGS, LSMETSLPPTSSSLPTTETATT, SHSTPSFSSSTIHSTVSTPTTVISSGPPT, SAMSTSDIPSSPSIQNTETS, TSTL…FSSS, TTITRSTPTSETTYPISSTST, TMTETSSSATSLPLTSPLVSTTE, SRIPSSLSTDIPTSQPTTITPSSVGI, ETPSSTVATTGTGQTTFTSSTATSPETNTLTPTPDI, TTSH…NSNS, ITTT…SHST, STTSFTSSTATTETTSRSTPS, SITT…STTA, ITTI…TTAE, TETTSRSTPSYTSAITTTETTSHRTPSFTSSIAT, TSNSTASLTSSMTTTETTSHSTPSLTSSMTATETTSHSTP, TTET…SSIT, NSTS…PSFT, SHSTPSFNSSITTTETLSHST, TETT…STSS, YSPSSFTSSITTTESPSHSTPS, TSSFTSSITSTETTSHSTPSLTSSITATG, HSLPSFTSSSTTTETPSHSPPGFSSSIATSKTIS, YTSS…ITTT, ITNTESTSRSTPSFTFSTTSTETTSHSTPSFT, TTKT…ATSK, TTSY…HSPP, STPSFTSSITTTETTSQSSPS, HSTASFTSSITTTETTSHSTRSITSSIT, TSSI…PPIF, TTETNSHSPPSFTSSIATTETPSHSPPSFTS, TESTSHSTPSFTSSIATTETTSHTPP, TETPSHSTPSFPSSITTTQSASHSTP, TKTT…TSTS, TTGTSSHNTLGLSSSVDTTKTT, ITTTETTSHSTPSITSSVTTAERTSH, TTESTSHSNPSLTSAITTTETRS, TTETTSHSPPSFTSSISITETPSHSPP, TETASHSNPSSTSSITTTESTSHSPPRSTSAIATTGI, SHSTASFTSSITSTETISHS, FTSSITTTESTSQSTPSFTFSTTSTETTSHS, SYTSSITTTETPSHSSPSFPSTITSTETISHRTP, TETI…TTST, TGTSSHSTLGLSSSVTTTKTTSH, TEITSHSPPSFTSSSTTTETPSHSTPGFSSSIATSK, SHST…PPIF, TTESTSHSNPSLTSAITTTETRSHSPP, AETT…TTGI, FTSSITTTESTSQSTPSFTFSTTSTE, TSSITTTETPSHSSPSFPSSITSTETISHRTP, SHSTPSFTSSITTTKSTSHSNPSL, TTET…PPSF, TTSHGTPSLTSLIATTKSTPQNPSSFT, TSSITTTETTSHSTPRITSSITTTEKTSHSTP, TTTESTSHSNPSLTSAITNTETRSHS, TTSH…SKTI, SDSTPSFTSSVTTTETTSQSSPSF, ITTT…TVPS, ITTE…SPLS, TSSIATSETPSHSTPSFPSSITTTQSISHSTPSLSSA, TTKTTSHSPPSFTASITSTK, SHSSPSFTSSSTTTEIPSHSTPGFSSSIATSKTTSTS, TTSFPSSITTTETTSHSTPSF, TTTE…QRSP, TTET…SPSS, SHSTPSFTSSITSPETISHSTP, TGTE…SPSH, STTATPPDSTPSFTSSIATTENTSHSTPSFTSSITTT, TTET…PGFS, TKTTSHSTPDFTSSIASTKTTSHSTP, SIAT…HSPP, TSSFTSSITTTETTSQSTPSFTSSIAVTETPSDSTPV, PSYTSSIITTKTPSHSTPSFPSSITTTETISHSTP, TETT…STPI, TTET…TTET, EMTS…NTPS, FTTAETGVTSTPSSPSSLSTDIPT, SSPSIQSTETSSLVGTTSPT, IPSTHSSTLQTTPSIPSLQTS, TSSMTPESESSIIPNASSSTGTGTVPT, and SLPTILRTSSKSTHPSPPTARTSETSVATTQTPTT. 2 stretches are compositionally biased toward low complexity: residues 513–538 and 547–559; these read SMTTTASGPTTTNTLSSLTSSILSST and TSHTTTTTPPSTL. Low complexity predominate over residues 1620–1638; it reads TSTPPITSSVTPTNTVTSM. A compositionally biased stretch (polar residues) spans 1944–1956; the sequence is TTSATMEPPSSSV. The segment covering 1957–1968 has biased composition (low complexity); sequence AATDTGQTTFTS. The span at 2066–2091 shows a compositional bias: polar residues; that stretch reads NASSMTTSETTYPNSPTGPVTNSMSK. Over residues 2096 to 2107 the composition is skewed to low complexity; it reads ASMTQTSSTATS. Residues 2113-2123 show a composition bias toward polar residues; it reads PSGSTTEIAKS. Residues 2170–2185 show a composition bias toward low complexity; that stretch reads STSMTPSTVSTSIPTS. Over residues 2186–2195 the composition is skewed to polar residues; the sequence is QPKTVNSSSG. Composition is skewed to low complexity over residues 2292–2308 and 2442–2458; these read SSPPATTSTLHTTAEST and RSTPTSETTYPTSPTST. The segment covering 2591–2603 has biased composition (low complexity); that stretch reads SAMSTSDIPSSPS. Low complexity-rich tracts occupy residues 2929–2944 and 3074–3097; these read STDIPTSQPTTITPSS and ETPSSTVATTGTGQTTFTSSTATS. A compositionally biased stretch (polar residues) spans 3098–3109; it reads PETNTLTPTPDI. Over residues 3309–3359 the composition is skewed to low complexity; sequence TTSHSTPSFTSPIATTKTSSHSSPSFTSSIATLETTSHSTPSFTSSITTNS. The span at 3360-3370 shows a compositional bias: polar residues; sequence HSTPRFSSSIA. The span at 3371–3385 shows a compositional bias: low complexity; the sequence is TRETTSHSTSSFTPS. Over residues 3386–3395 the composition is skewed to polar residues; it reads IATTKTNSNS. Residues 3420–3452 are compositionally biased toward low complexity; that stretch reads ITTTETTSHSTPSFTSSMATTKTTSHSTPSFTS. Over residues 3453–3462 the composition is skewed to polar residues; sequence PIATRETTSH. Residues 3463–3481 are compositionally biased toward low complexity; that stretch reads STPSFTSLITTTKTTSHST. Residues 3740 to 3749 are compositionally biased toward polar residues; that stretch reads ITTIETPSHG. Low complexity predominate over residues 3750 to 3785; sequence TPSFTSSITSTETTSHSSPSFISSITTTEITSHSTP. Over residues 3786-3812 the composition is skewed to polar residues; the sequence is RFTSSITTMETPSHSTPNFTSSITTAE. Low complexity-rich tracts occupy residues 4020 to 4042 and 4067 to 4096; these read STPSYTSAITTTETTSHRTPSFT and TSNSTASLTSSMTTTETTSHSTPSLTSSMT. The span at 4097-4106 shows a compositional bias: polar residues; sequence ATETTSHSTP. Composition is skewed to low complexity over residues 4182-4228 and 4237-4249; these read TTET…PSFT and TSHSTPSFTSSIT. Residues 4557–4574 are compositionally biased toward low complexity; sequence TETTSNSSPSFTSSITNT. Residues 4575–4601 are compositionally biased toward polar residues; sequence KTTSYSPPGFTSSIPATETTSRSPPGF. Residues 4602 to 4617 show a composition bias toward low complexity; it reads TSSITTTETTSHSTSS. The span at 4802 to 4827 shows a compositional bias: low complexity; it reads TSSFTSSITSTETTSHSTPSLTSSIT. The span at 5137–5158 shows a compositional bias: low complexity; sequence TPSHITPSFTSTITTSESTSHS. A compositionally biased stretch (polar residues) spans 5159 to 5170; that stretch reads NPSLTSAITTTE. Composition is skewed to low complexity over residues 5174–5203 and 5458–5486; these read HSPPIFTSSITTTETTSHNTPSFTSSITTT and TESTSRSTPSFTFSTTSTETTSHSTPSFT. The segment covering 5834–5858 has biased composition (low complexity); it reads TTSYSTPSITSSITTTERTSHSTPS. The span at 5859–5874 shows a compositional bias: polar residues; the sequence is YTSSIATRETPSHTVP. The segment covering 5875 to 5889 has biased composition (low complexity); that stretch reads SFTSSITTTESTSHS. A compositionally biased stretch (polar residues) spans 5890 to 5901; that stretch reads NPSLTSAITTTE. Residues 6045–6059 are compositionally biased toward low complexity; the sequence is SFTSSITTTDSTSHS. Positions 6060-6071 are enriched in polar residues; sequence NPSLTSAITTTE. Residues 6172-6185 are compositionally biased toward low complexity; the sequence is TESTSHSTPSFTSS. Residues 6186 to 6197 are compositionally biased toward polar residues; that stretch reads IATTETTSHTPP. Low complexity predominate over residues 6456–6475; sequence TETPSHSTPSFPSSITTTQS. Residues 6852–6867 are compositionally biased toward polar residues; the sequence is HNTLGLSSSVDTTKTT. The span at 6946-6965 shows a compositional bias: low complexity; that stretch reads ITTTETTSHSTPSITSSVTT. Residues 6999–7018 show a composition bias toward polar residues; sequence TTESTSHSNPSLTSAITTTE. The segment covering 7172–7206 has biased composition (low complexity); it reads TASHSNPSSTSSITTTESTSHSPPRSTSAIATTGI. Composition is skewed to low complexity over residues 7300–7329 and 7400–7427; these read TSSITTTESTSQSTPSFTFSTTSTETTSHS and SYTSSITTTETPSHSSPSFPSTITSTET. Over residues 7476-7491 the composition is skewed to polar residues; the sequence is TETISHSPPSFTSLTN. Residues 7492 to 7532 show a composition bias toward low complexity; sequence STETTSHSPPSFTSSSTTTETPSHSTPGFSSSIATSKTTST. Low complexity-rich tracts occupy residues 7734-7766 and 7922-7944; these read TSHSPPSFTSSSTTTETPSHSTPGFSSSIATSK and SHSTRSITSSITTTKRTSHSTPS. The segment covering 7945–7987 has biased composition (polar residues); the sequence is YTSSIATSETPSHTVPSFTSLITTTDSTSHSNPSLTSAITTTE. The span at 8088–8101 shows a compositional bias: low complexity; the sequence is TESTSHSTPSFTSS. Residues 8102-8113 are compositionally biased toward polar residues; sequence IATTETTSHTPP. Residues 8372 to 8391 are compositionally biased toward low complexity; the sequence is TETPSHSTPSFPSSITTTQS. Positions 8768 to 8783 are enriched in polar residues; that stretch reads HNTLGLSSSVDTTKTT. Residues 8862 to 8881 show a composition bias toward low complexity; that stretch reads ITTTETTSHSTPSITSSVTT. The span at 8915-8934 shows a compositional bias: polar residues; sequence TTESTSHSNPSLTSAITTTE. Low complexity-rich tracts occupy residues 9067 to 9081 and 9088 to 9122; these read PTTETTSHSPPSFTS and TASHSNPSSTSSITTTESTSHSPPRSTSAIATTGI. Low complexity predominate over residues 9335–9360; that stretch reads TSSITTTETPSHSSPSFPSSITSTET. Over residues 9409–9424 the composition is skewed to polar residues; the sequence is TETISHSPPSFTSLTN. Composition is skewed to low complexity over residues 9425 to 9465, 9566 to 9585, and 9612 to 9624; these read STET…TTST, SHSTPSFTSSITTTKSTSHS, and TTETTSHRTPSFT. A compositionally biased stretch (polar residues) spans 9625–9661; the sequence is SSIATAETTSHSPPSFTSLITTSETPSHSNPSFTSLI. The segment covering 9662–9674 has biased composition (low complexity); sequence TTTESTSHSPPSF. Composition is skewed to polar residues over residues 9892 to 9903 and 9921 to 9933; these read NPSLTSAITNTE and TTSHSPPSFTSLI. Positions 9934-9973 are enriched in low complexity; it reads TSTETTSHSPPSFTSSSTTTETPSHSTPGFSSSIATSKTI. A compositionally biased stretch (low complexity) spans 10120–10130; the sequence is ITTTETTSHST. Over residues 10131 to 10166 the composition is skewed to polar residues; it reads PNITSSVTTTERTSHSTPSYTSSIATGETPSHTVPS. 2 stretches are compositionally biased toward low complexity: residues 10196–10271 and 10394–10421; these read HSPP…SFTS and TSETPSHSTPSFPSSITTTQSISHSTPS. Positions 10750–10791 are enriched in polar residues; that stretch reads TTTETTSHSPPRFTSSITTTKTPSDSTPVFTPSIATSETSSH. Composition is skewed to low complexity over residues 10792 to 10828, 10887 to 10937, and 10950 to 11032; these read STPGYTSSTATTETMSHSTSSFTSSITTTETTSQRSP, TTET…SSIT, and PSSI…SPSS. A compositionally biased stretch (low complexity) spans 11278 to 11291; the sequence is TETTSHSPPHFTSS. Polar residues predominate over residues 11292–11317; it reads ITRTKTTSHRPPTFTSSITTTESPSH. Residues 11566–11682 are compositionally biased toward low complexity; that stretch reads TTETTSHSIP…SHSTSGFTSS (117 aa). Composition is skewed to polar residues over residues 11683–11697 and 11754–11769; these read NATTETTSHSTPGFS and TKTTSHSTPDFTSSIA. Composition is skewed to low complexity over residues 11770–11779 and 11818–11880; these read STKTTSHSTP and SIAT…SHST. Polar residues-rich tracts occupy residues 11881 to 11896 and 11903 to 11912; these read PSFTSSIATIETTSHS and LIPTTKTTLH. Low complexity-rich tracts occupy residues 11913–11949 and 12067–12091; these read SPPSFTSSITTTKTTSHSTSSLTSSMPTTKTTSHSPP and TSSFTSSITTTETTSQSTPSFTSSI. A compositionally biased stretch (polar residues) spans 12092 to 12103; sequence AVTETPSDSTPV. The span at 12280-12309 shows a compositional bias: low complexity; that stretch reads TETTSHSAPNFSSSITSTETTSHSTPSFTS. Positions 12310 to 12323 are enriched in polar residues; sequence AITSTETTSHSTPI. Over residues 12364–12412 the composition is skewed to low complexity; the sequence is TTETTSHSTPGFASSITTTKTTSHSTPSFTSSIATSNTTSSSTPGFTSS. Residues 12413 to 12439 show a composition bias toward polar residues; sequence IATTETTSRSTPGFTSSIVTTETTSPH. Positions 12440-12452 are enriched in low complexity; sequence TPGFTSSITTTET. The segment covering 12468–12477 has biased composition (polar residues); sequence EMTSHSTPSL. Low complexity-rich tracts occupy residues 12478–12569, 12624–12639, 12681–12692, 12794–12805, 12990–13003, and 13073–13086; these read TFSI…VTTP, TSTPSSPSSLSTDIPT, SSPSIQSTETSS, QTTPSIPSLQTS, PESESSIIPNASSS, and TSETSVATTQTPTT. An EGF-like domain is found at 13130–13163; it reads SGDRCQLQTRCQNGGQWDGLKCQCPSTFYGSSCE. Cystine bridges form between cysteine 13134-cysteine 13140 and cysteine 13153-cysteine 13162. One can recognise an SEA domain in the interval 13172-13297; sequence DVVETEVGME…DSIKVNNNSK (126 aa). Residues 13381–13401 traverse the membrane as a helical segment; it reads LVGGLTAGAALLVLLLLALGV.

Highly O-glycosylated and probably also N-glycosylated. In terms of tissue distribution, fetal and adult small intestine and fetal and adult colon.

It localises to the membrane. Functionally, major glycoprotein component of a variety of mucus gels. Thought to provide a protective, lubricating barrier against particles and infectious agents at mucosal surfaces. The protein is Mucin-3B of Homo sapiens (Human).